The primary structure comprises 283 residues: NFU1 iron-sulfur cluster scaffold homolog, mitochondrial (283 aa).

The N-terminal 65 residues, 1 to 65 (MSKFLSQAAI…ELRMPVACRR (65 aa)), are a transit peptide targeting the mitochondrion. The segment at 182–250 (IKELLDTRIR…IPEVESVEQV (69 aa)) is nifU. Residues cysteine 219 and cysteine 222 each coordinate [4Fe-4S] cluster.

This sequence belongs to the NifU family.

Its subcellular location is the mitochondrion. Molecular scaffold for [Fe-S] cluster assembly of mitochondrial iron-sulfur proteins. In Drosophila simulans (Fruit fly), this protein is NFU1 iron-sulfur cluster scaffold homolog, mitochondrial.